We begin with the raw amino-acid sequence, 120 residues long: Vanadium-binding protein 2 (120 aa).

The N-terminal stretch at 1 to 20 (MSKVIFALVLVVVLVACINA) is a signal peptide. The propeptide occupies 21–29 (TYVEFEEAY). 9 disulfides stabilise this stretch: Cys-34-Cys-88, Cys-38-Cys-84, Cys-42-Cys-81, Cys-48-Cys-74, Cys-52-Cys-69, Cys-56-Cys-65, Cys-92-Cys-119, Cys-97-Cys-114, and Cys-101-Cys-111.

As to quaternary structure, interacts with VIP1. In terms of tissue distribution, expressed in vanadocytes.

The protein localises to the cytoplasm. Acts as a vanadium reductase which may form an electron transfer cascade in conjunction with NADPH and glutathione through thiol disulfide exchange reactions. Partial cleavage of its disulfide bonds results in the reduction of V(5+) to V(4+). Binds up to 24 V(4+) ions per protein at pH 7.5. Also binds Fe(3+) and Cu(2+) and, to a lesser extent, Co(2+), Zn(2+) and Ni(2+). The protein is Vanadium-binding protein 2 of Ascidia sydneiensis samea (Vanadium-rich ascidian).